The sequence spans 207 residues: Large ribosomal subunit protein uL4 (207 aa).

The span at 43–52 shows a compositional bias: polar residues; that stretch reads NKRQGTQSAK. Residues 43–72 form a disordered region; that stretch reads NKRQGTQSAKTRAEVRGGGRKPWKQKGTGR. The segment covering 60–71 has biased composition (basic residues); the sequence is GGRKPWKQKGTG.

Belongs to the universal ribosomal protein uL4 family. In terms of assembly, part of the 50S ribosomal subunit.

Its function is as follows. One of the primary rRNA binding proteins, this protein initially binds near the 5'-end of the 23S rRNA. It is important during the early stages of 50S assembly. It makes multiple contacts with different domains of the 23S rRNA in the assembled 50S subunit and ribosome. In terms of biological role, forms part of the polypeptide exit tunnel. This chain is Large ribosomal subunit protein uL4, found in Alkaliphilus metalliredigens (strain QYMF).